The chain runs to 392 residues: Phospho-N-acetylmuramoyl-pentapeptide-transferase (392 aa).

Transmembrane regions (helical) follow at residues Arg-28–Ile-48, Thr-76–Leu-96, Phe-100–Trp-120, Tyr-137–Glu-157, Ile-193–Ser-213, Gly-225–Thr-245, Ser-262–Phe-282, Val-289–Ile-309, Ile-314–Val-334, and Gln-369–Leu-389.

The protein belongs to the glycosyltransferase 4 family. MraY subfamily. Requires Mg(2+) as cofactor.

It localises to the cell inner membrane. It carries out the reaction UDP-N-acetyl-alpha-D-muramoyl-L-alanyl-gamma-D-glutamyl-meso-2,6-diaminopimeloyl-D-alanyl-D-alanine + di-trans,octa-cis-undecaprenyl phosphate = di-trans,octa-cis-undecaprenyl diphospho-N-acetyl-alpha-D-muramoyl-L-alanyl-D-glutamyl-meso-2,6-diaminopimeloyl-D-alanyl-D-alanine + UMP. The protein operates within cell wall biogenesis; peptidoglycan biosynthesis. In terms of biological role, catalyzes the initial step of the lipid cycle reactions in the biosynthesis of the cell wall peptidoglycan: transfers peptidoglycan precursor phospho-MurNAc-pentapeptide from UDP-MurNAc-pentapeptide onto the lipid carrier undecaprenyl phosphate, yielding undecaprenyl-pyrophosphoryl-MurNAc-pentapeptide, known as lipid I. The sequence is that of Phospho-N-acetylmuramoyl-pentapeptide-transferase from Polaromonas naphthalenivorans (strain CJ2).